The following is a 363-amino-acid chain: Peroxin-36 (363 aa).

At 1-193 the chain is on the cytoplasmic side; the sequence is MSNLEKQIRL…ESFFINSFEQ (193 aa). 2 disordered regions span residues 71-114 and 128-157; these read QNHQ…DTST and TNSNESQSKGRPSEYTHVNSPDSGVSSKSG. Over residues 97–114 the composition is skewed to low complexity; the sequence is VDSNSDSSSSETLIDTST. Residues 194–213 form a helical membrane-spanning segment; the sequence is LIALFDNFYFLSSLIGFNTS. Over 214–232 the chain is Peroxisomal; sequence NSNSKITRLLRNFIKQASK. The helical transmembrane segment at 233 to 250 threads the bilayer; sequence IWLVIIFLTVKNLFIRMI. At 251-363 the chain is on the cytoplasmic side; sequence KLNRTEKKVK…SSDDIIDEYA (113 aa).

The protein resides in the peroxisome membrane. In terms of biological role, controls peroxisome morphology and abundance under conditions of peroxisome proliferation such as oleate and methanol media. Has additional function(s), which is not present in its functional homologs such as Saccharomyces cerevisea PEX34 or human PEX16. This Komagataella phaffii (strain GS115 / ATCC 20864) (Yeast) protein is Peroxin-36.